The sequence spans 149 residues: Nucleoside diphosphate kinase (149 aa).

ATP is bound by residues Lys-9, Phe-57, Arg-85, Thr-91, Arg-102, and Asn-112. The active-site Pros-phosphohistidine intermediate is the His-115.

The protein belongs to the NDK family. As to quaternary structure, homotetramer. Mg(2+) serves as cofactor.

The protein resides in the cytoplasm. It carries out the reaction a 2'-deoxyribonucleoside 5'-diphosphate + ATP = a 2'-deoxyribonucleoside 5'-triphosphate + ADP. It catalyses the reaction a ribonucleoside 5'-diphosphate + ATP = a ribonucleoside 5'-triphosphate + ADP. In terms of biological role, major role in the synthesis of nucleoside triphosphates other than ATP. The ATP gamma phosphate is transferred to the NDP beta phosphate via a ping-pong mechanism, using a phosphorylated active-site intermediate. The sequence is that of Nucleoside diphosphate kinase from Trichodesmium erythraeum (strain IMS101).